A 132-amino-acid chain; its full sequence is uncharacterized protein (132 aa).

This is an uncharacterized protein from Archaeoglobus fulgidus (strain ATCC 49558 / DSM 4304 / JCM 9628 / NBRC 100126 / VC-16).